A 145-amino-acid chain; its full sequence is 3-dehydroquinate dehydratase (145 aa).

Residue Tyr-23 is the Proton acceptor of the active site. Substrate-binding residues include Asn-73, His-79, and Asp-86. Catalysis depends on His-99, which acts as the Proton donor. Substrate-binding positions include Leu-100–Ser-101 and Arg-110.

It belongs to the type-II 3-dehydroquinase family. As to quaternary structure, homododecamer.

It catalyses the reaction 3-dehydroquinate = 3-dehydroshikimate + H2O. Its pathway is metabolic intermediate biosynthesis; chorismate biosynthesis; chorismate from D-erythrose 4-phosphate and phosphoenolpyruvate: step 3/7. Catalyzes a trans-dehydration via an enolate intermediate. The sequence is that of 3-dehydroquinate dehydratase from Desulfitobacterium hafniense (strain DSM 10664 / DCB-2).